Here is a 249-residue protein sequence, read N- to C-terminus: Adapter protein MecA (249 aa).

It belongs to the MecA family. As to quaternary structure, homodimer.

Its function is as follows. Enables the recognition and targeting of unfolded and aggregated proteins to the ClpC protease or to other proteins involved in proteolysis. This chain is Adapter protein MecA, found in Streptococcus thermophilus (strain ATCC BAA-491 / LMD-9).